Consider the following 252-residue polypeptide: Large ribosomal subunit protein uL4 (252 aa).

The protein belongs to the universal ribosomal protein uL4 family. As to quaternary structure, part of the 50S ribosomal subunit.

One of the primary rRNA binding proteins, this protein initially binds near the 5'-end of the 23S rRNA. It is important during the early stages of 50S assembly. It makes multiple contacts with different domains of the 23S rRNA in the assembled 50S subunit and ribosome. In terms of biological role, forms part of the polypeptide exit tunnel. The protein is Large ribosomal subunit protein uL4 of Methanococcus maripaludis (strain C7 / ATCC BAA-1331).